Consider the following 249-residue polypeptide: Probable hydroxyacylglutathione hydrolase ECU02_0580 (249 aa).

Zn(2+) is bound by residues His-75, His-77, Asp-79, His-80, His-126, Asp-144, and His-183. Residues 183-185 (HDY) and 240-243 (RERK) each bind substrate.

Belongs to the metallo-beta-lactamase superfamily. Glyoxalase II family. Zn(2+) serves as cofactor.

It localises to the cytoplasm. The protein localises to the nucleus. The enzyme catalyses an S-(2-hydroxyacyl)glutathione + H2O = a 2-hydroxy carboxylate + glutathione + H(+). The protein operates within secondary metabolite metabolism; methylglyoxal degradation; (R)-lactate from methylglyoxal: step 2/2. Thiolesterase that catalyzes the hydrolysis of S-D-lactoyl-glutathione to form glutathione and D-lactic acid. This is Probable hydroxyacylglutathione hydrolase ECU02_0580 from Encephalitozoon cuniculi (strain GB-M1) (Microsporidian parasite).